The sequence spans 238 residues: Pyridoxine 5'-phosphate synthase (238 aa).

Asn6 contacts 3-amino-2-oxopropyl phosphate. 8 to 9 (DH) contacts 1-deoxy-D-xylulose 5-phosphate. Arg17 lines the 3-amino-2-oxopropyl phosphate pocket. His42 serves as the catalytic Proton acceptor. 2 residues coordinate 1-deoxy-D-xylulose 5-phosphate: Arg44 and His49. Glu69 acts as the Proton acceptor in catalysis. Thr99 contributes to the 1-deoxy-D-xylulose 5-phosphate binding site. Residue His186 is the Proton donor of the active site. Residues Gly187 and 208 to 209 (GH) each bind 3-amino-2-oxopropyl phosphate.

It belongs to the PNP synthase family. As to quaternary structure, homooctamer; tetramer of dimers.

It localises to the cytoplasm. The catalysed reaction is 3-amino-2-oxopropyl phosphate + 1-deoxy-D-xylulose 5-phosphate = pyridoxine 5'-phosphate + phosphate + 2 H2O + H(+). It participates in cofactor biosynthesis; pyridoxine 5'-phosphate biosynthesis; pyridoxine 5'-phosphate from D-erythrose 4-phosphate: step 5/5. Functionally, catalyzes the complicated ring closure reaction between the two acyclic compounds 1-deoxy-D-xylulose-5-phosphate (DXP) and 3-amino-2-oxopropyl phosphate (1-amino-acetone-3-phosphate or AAP) to form pyridoxine 5'-phosphate (PNP) and inorganic phosphate. The chain is Pyridoxine 5'-phosphate synthase from Anaplasma marginale (strain St. Maries).